Here is a 492-residue protein sequence, read N- to C-terminus: Catalase isozyme 1 (492 aa).

Residues histidine 65 and asparagine 138 contribute to the active site. Tyrosine 348 serves as a coordination point for heme.

It belongs to the catalase family. As to quaternary structure, homotetramer. The cofactor is heme.

The protein localises to the cytoplasm. It localises to the cytosol. It is found in the peroxisome matrix. The enzyme catalyses 2 H2O2 = O2 + 2 H2O. Its activity is regulated as follows. Inhibited by salicylic acid. Its function is as follows. Catalyzes the degradation of hydrogen peroxide (H(2)O(2)) generated by peroxisomal oxidases to water and oxygen, thereby protecting cells from the toxic effects of hydrogen peroxide. This Nicotiana tabacum (Common tobacco) protein is Catalase isozyme 1 (CAT-1).